Here is a 346-residue protein sequence, read N- to C-terminus: GTPase Obg (346 aa).

The region spanning 1-159 is the Obg domain; it reads MRFVDEVTFV…RELRLELQLL (159 aa). The segment at 128 to 148 is disordered; that stretch reads LHFKSSTNRAPRQSTEGTAGE. The segment covering 130–144 has biased composition (polar residues); that stretch reads FKSSTNRAPRQSTEG. Residues 160–335 form the OBG-type G domain; it reads ADVGLLGMPN…LCGDIMNDLE (176 aa). Residues 166–173, 191–195, 213–216, 285–288, and 316–318 each bind GTP; these read GMPNVGKS, FTTLY, DIPG, NRLD, and SGL. 2 residues coordinate Mg(2+): S173 and T193.

The protein belongs to the TRAFAC class OBG-HflX-like GTPase superfamily. OBG GTPase family. In terms of assembly, monomer. It depends on Mg(2+) as a cofactor.

Its subcellular location is the cytoplasm. Its function is as follows. An essential GTPase which binds GTP, GDP and possibly (p)ppGpp with moderate affinity, with high nucleotide exchange rates and a fairly low GTP hydrolysis rate. Plays a role in control of the cell cycle, stress response, ribosome biogenesis and in those bacteria that undergo differentiation, in morphogenesis control. This is GTPase Obg from Halorhodospira halophila (strain DSM 244 / SL1) (Ectothiorhodospira halophila (strain DSM 244 / SL1)).